The primary structure comprises 310 residues: tRNA pseudouridine synthase B (310 aa).

Catalysis depends on D49, which acts as the Nucleophile.

This sequence belongs to the pseudouridine synthase TruB family. Type 1 subfamily.

It catalyses the reaction uridine(55) in tRNA = pseudouridine(55) in tRNA. Functionally, responsible for synthesis of pseudouridine from uracil-55 in the psi GC loop of transfer RNAs. The sequence is that of tRNA pseudouridine synthase B from Idiomarina loihiensis (strain ATCC BAA-735 / DSM 15497 / L2-TR).